The sequence spans 336 residues: Aspartate carbamoyltransferase catalytic subunit (336 aa).

The carbamoyl phosphate site is built by Arg-71 and Thr-72. Position 99 (Lys-99) interacts with L-aspartate. Residues Arg-121, His-151, and Gln-154 each coordinate carbamoyl phosphate. L-aspartate contacts are provided by Arg-184 and Arg-239. Gly-280 and Pro-281 together coordinate carbamoyl phosphate.

The protein belongs to the aspartate/ornithine carbamoyltransferase superfamily. ATCase family. As to quaternary structure, heterododecamer (2C3:3R2) of six catalytic PyrB chains organized as two trimers (C3), and six regulatory PyrI chains organized as three dimers (R2).

The enzyme catalyses carbamoyl phosphate + L-aspartate = N-carbamoyl-L-aspartate + phosphate + H(+). The protein operates within pyrimidine metabolism; UMP biosynthesis via de novo pathway; (S)-dihydroorotate from bicarbonate: step 2/3. Its function is as follows. Catalyzes the condensation of carbamoyl phosphate and aspartate to form carbamoyl aspartate and inorganic phosphate, the committed step in the de novo pyrimidine nucleotide biosynthesis pathway. This is Aspartate carbamoyltransferase catalytic subunit from Azotobacter vinelandii (strain DJ / ATCC BAA-1303).